The primary structure comprises 505 residues: Surface lipoprotein assembly modifier 2 (505 aa).

The N-terminal stretch at 1-19 is a signal peptide; sequence MLYFRYGFLVVWCAAGVSA. Residues 23–188 form an N-terminal domain region; it reads ADAPAILDDK…RFRKKTEGLT (166 aa). Residues 189–505 form a C-terminal probable beta barrel region; sequence GWRFSGGISP…EVFVSADWRF (317 aa). 14 beta stranded membrane passes run 190 to 200, 232 to 243, 248 to 258, 273 to 283, 287 to 297, 326 to 335, 340 to 350, 368 to 377, 381 to 391, 411 to 420, 427 to 437, 456 to 465, 472 to 482, and 495 to 505; these read WRFSGGISPAV, LNYEIEAEKLTP, HYLLFRSNIGG, FGRAYLGWQYK, QTAGILPFYQV, VGVQLSHTYR, WQFSVALEHYR, GFYVSSAKRL, ATVFGGWQFVR, NGVYAGWAQE, LNSRVSASYAR, WNVSLALSHD, IVPALNYRFGR, and SEVFVSADWRF.

Belongs to the Slam family.

The protein localises to the cell outer membrane. Its function is as follows. Required for correct export to the cell surface of cell outer membrane lipoprotein HpuA heterologously in E.coli (hpuA does not exist in N.meningitidis strain MC58). In Neisseria meningitidis serogroup B (strain ATCC BAA-335 / MC58), this protein is Surface lipoprotein assembly modifier 2.